The following is a 593-amino-acid chain: Probable translation initiation factor IF-2 (593 aa).

Positions 7-221 constitute a tr-type G domain; sequence IRTPIVCVMG…VLIGLAQRYM (215 aa). Residues 16-23 form a G1 region; that stretch reads GHVDHGKT. Position 16-23 (16-23) interacts with GTP; it reads GHVDHGKT. The tract at residues 41–45 is G2; that stretch reads EITQH. Positions 77-80 are G3; it reads DTPG. GTP contacts are provided by residues 77 to 81 and 131 to 134; these read DTPGH and NKVD. Residues 131-134 form a G4 region; the sequence is NKVD. Residues 199–201 are G5; sequence SAL.

Belongs to the TRAFAC class translation factor GTPase superfamily. Classic translation factor GTPase family. IF-2 subfamily.

Its function is as follows. Function in general translation initiation by promoting the binding of the formylmethionine-tRNA to ribosomes. Seems to function along with eIF-2. This Methanoculleus marisnigri (strain ATCC 35101 / DSM 1498 / JR1) protein is Probable translation initiation factor IF-2.